The primary structure comprises 59 residues: Potassium channel toxin alpha-KTx 16.7 (59 aa).

The first 22 residues, 1–22 (MKILSILLIALVICSISICTEA), serve as a signal peptide directing secretion. Cystine bridges form between Cys30-Cys51, Cys36-Cys56, and Cys40-Cys58.

The protein belongs to the short scorpion toxin superfamily. Potassium channel inhibitor family. Alpha-KTx 16 subfamily. As to expression, expressed by the venom gland.

It localises to the secreted. May play a role in blocking voltage-gated potassium channels Kv1.2/KCNA2, and Kv1.3/KCNA3. Blocks the voltage-gated potassium channel Kv1.3/KCNA3, with an IC(50) of 118.3 +-55.8 nM. The polypeptide is Potassium channel toxin alpha-KTx 16.7 (Mesobuthus gibbosus (Mediterranean checkered scorpion)).